We begin with the raw amino-acid sequence, 222 residues long: Transmembrane protein 114 (222 aa).

Residues 7–27 (ALAGAAALSGALSFVLLAAAI) traverse the membrane as a helical segment. N-linked (GlcNAc...) asparagine glycans are attached at residues Asn-54 and Asn-88. Helical transmembrane passes span 105-125 (FVIL…TGFL), 133-153 (LLLL…LTGI), and 188-208 (LALG…FLAA).

The protein resides in the cell junction. Its subcellular location is the tight junction. The protein localises to the lateral cell membrane. It localises to the apical cell membrane. The sequence is that of Transmembrane protein 114 from Mus musculus (Mouse).